The primary structure comprises 211 residues: Uracil phosphoribosyltransferase (211 aa).

Residues R77, R102, and 129-137 each bind 5-phospho-alpha-D-ribose 1-diphosphate; that span reads DPMLATGGS. Residues I192 and 197 to 199 each bind uracil; that span reads GDA. D198 contributes to the 5-phospho-alpha-D-ribose 1-diphosphate binding site.

This sequence belongs to the UPRTase family. Mg(2+) serves as cofactor.

The catalysed reaction is UMP + diphosphate = 5-phospho-alpha-D-ribose 1-diphosphate + uracil. It functions in the pathway pyrimidine metabolism; UMP biosynthesis via salvage pathway; UMP from uracil: step 1/1. Allosterically activated by GTP. Catalyzes the conversion of uracil and 5-phospho-alpha-D-ribose 1-diphosphate (PRPP) to UMP and diphosphate. This chain is Uracil phosphoribosyltransferase, found in Corynebacterium aurimucosum (strain ATCC 700975 / DSM 44827 / CIP 107346 / CN-1) (Corynebacterium nigricans).